Consider the following 136-residue polypeptide: Cytidine deaminase (136 aa).

The 128-residue stretch at 1-128 folds into the CMP/dCMP-type deaminase domain; the sequence is MNRQELITEA…ELLPGAFSSE (128 aa). 42–44 contacts substrate; sequence NIE. Cys53 is a binding site for Zn(2+). Glu55 functions as the Proton donor in the catalytic mechanism. Residues Cys86 and Cys89 each contribute to the Zn(2+) site.

It belongs to the cytidine and deoxycytidylate deaminase family. Homotetramer. Zn(2+) serves as cofactor.

It carries out the reaction cytidine + H2O + H(+) = uridine + NH4(+). It catalyses the reaction 2'-deoxycytidine + H2O + H(+) = 2'-deoxyuridine + NH4(+). This enzyme scavenges exogenous and endogenous cytidine and 2'-deoxycytidine for UMP synthesis. This is Cytidine deaminase (cdd) from Bacillus subtilis (strain 168).